The sequence spans 54 residues: U-myrmicitoxin(01)-Tb5a (54 aa).

The first 26 residues, 1–26 (MQLSHLLLAFAMIFVMTIMYAPQVQA), serve as a signal peptide directing secretion. Positions 27–38 (DAWADANADADV) are excised as a propeptide.

The protein belongs to the formicidae venom precursor-01 superfamily. Post-translationally, contains 1 disulfide bond. In terms of tissue distribution, expressed by the venom gland.

Its subcellular location is the secreted. The protein is U-myrmicitoxin(01)-Tb5a of Tetramorium bicarinatum (Tramp ant).